Consider the following 650-residue polypeptide: uncharacterized protein (650 aa).

It belongs to the MG032/MG096/MG288 family.

This is an uncharacterized protein from Mycoplasma genitalium (strain ATCC 33530 / DSM 19775 / NCTC 10195 / G37) (Mycoplasmoides genitalium).